Reading from the N-terminus, the 352-residue chain is O(6)-methylguanine-induced apoptosis 2 (352 aa).

STPGR repeat units lie at residues asparagine 80–arginine 90, proline 124–lysine 139, proline 165–serine 171, glycine 205–arginine 235, asparagine 244–isoleucine 263, proline 286–aspartate 295, and leucine 325–isoleucine 335.

Belongs to the STPG1 family.

It localises to the cytoplasm. Its subcellular location is the nucleus. In terms of biological role, may positively contribute to the induction of apoptosis triggered by O(6)-methylguanine. This chain is O(6)-methylguanine-induced apoptosis 2 (stpg1), found in Xenopus laevis (African clawed frog).